Here is a 238-residue protein sequence, read N- to C-terminus: DNA repair protein RecO (238 aa).

It belongs to the RecO family.

Its function is as follows. Involved in DNA repair and RecF pathway recombination. The chain is DNA repair protein RecO from Anaplasma marginale (strain Florida).